A 103-amino-acid chain; its full sequence is Large ribosomal subunit protein bL21 (103 aa).

It belongs to the bacterial ribosomal protein bL21 family. Part of the 50S ribosomal subunit. Contacts protein L20.

Its function is as follows. This protein binds to 23S rRNA in the presence of protein L20. The protein is Large ribosomal subunit protein bL21 of Shewanella baltica (strain OS223).